The sequence spans 404 residues: uncharacterized protein (404 aa).

Transmembrane regions (helical) follow at residues 9–29, 36–56, 76–96, 103–123, 135–155, 162–182, 199–219, 236–256, 288–308, 319–339, and 366–386; these read IYLIGELSAKCVPFLLLPYLS, GFGELSYYQTFLPLFVIFIGL, LVVKTGYAYTLSIGGLGLLFC, IMFYLVLSAIFQVFLSVQLSI, FIQVSSTITNAALTILMLEFY, KRILAILISNVFVALLSYLIY, AFFYIMSFGFLMIFHHGSFFI, LGLYAMGAQIAFILSVFILAI, IVPIPSLVTLIVPEQWLLFFL, IIVFLLSTSLTIPYLFLVNYL, and LIFTDVVYIPYASVLGALGIL.

Belongs to the polysaccharide synthase family. HI_0867/HI_1700 subfamily.

Its subcellular location is the cell membrane. This is an uncharacterized protein from Haemophilus influenzae (strain ATCC 51907 / DSM 11121 / KW20 / Rd).